A 292-amino-acid chain; its full sequence is Enoyl-CoA hydratase domain-containing protein 2, mitochondrial (292 aa).

The transit peptide at 1–35 (MLRVLCLLRPWRPLRARGCASDGAAGGSEIQVRAL) directs the protein to the mitochondrion. Position 97 is an N6-acetyllysine; alternate (Lys-97). Lys-97 is subject to N6-succinyllysine; alternate.

This sequence belongs to the enoyl-CoA hydratase/isomerase family.

It is found in the mitochondrion. This Homo sapiens (Human) protein is Enoyl-CoA hydratase domain-containing protein 2, mitochondrial (ECHDC2).